Here is a 293-residue protein sequence, read N- to C-terminus: Protease HtpX (293 aa).

Transmembrane regions (helical) follow at residues 4–24 (IALFLLTNLAVMVVFGLVLSL) and 34–54 (GLMIMALLFGFGGSFVSLLMS). Zn(2+) is bound at residue H139. E140 is a catalytic residue. H143 is a Zn(2+) binding site. 2 helical membrane-spanning segments follow: residues 158 to 178 (VVNTFVIFISRILAQLAAGFM) and 193 to 213 (LIYFAVATVLELVFGILASII). E222 serves as a coordination point for Zn(2+).

This sequence belongs to the peptidase M48B family. The cofactor is Zn(2+).

The protein resides in the cell inner membrane. The protein is Protease HtpX of Escherichia coli (strain ATCC 8739 / DSM 1576 / NBRC 3972 / NCIMB 8545 / WDCM 00012 / Crooks).